Here is a 574-residue protein sequence, read N- to C-terminus: R-linalool synthase, chloroplastic (574 aa).

A chloroplast-targeting transit peptide spans 1-40; it reads MSCARITVTLPYRSAKTSIQRGITHCPALLRPRFSACTPL. A compositionally biased stretch (polar residues) spans 52-61; the sequence is INGDNSPLKN. Positions 52 to 71 are disordered; the sequence is INGDNSPLKNTHQHVEERSS. (2E)-geranyl diphosphate is bound by residues arginine 287, aspartate 324, aspartate 328, arginine 467, and aspartate 470. Residues aspartate 324 and aspartate 328 each coordinate Mg(2+). Positions 324 to 328 match the DDXXD motif motif; sequence DDIFD. Mg(2+)-binding residues include aspartate 470, threonine 474, and glutamate 478.

This sequence belongs to the terpene synthase family. Tpsb subfamily. Requires Mg(2+) as cofactor. Mn(2+) is required as a cofactor.

The protein localises to the plastid. Its subcellular location is the chloroplast. The enzyme catalyses (2E)-geranyl diphosphate + H2O = (R)-linalool + diphosphate. The protein operates within secondary metabolite biosynthesis; terpenoid biosynthesis. Its function is as follows. Monoterpene synthase that catalyzes the formation of (3R)-linalool from geranyl diphosphate. In Ocimum basilicum (Sweet basil), this protein is R-linalool synthase, chloroplastic (LIS).